The primary structure comprises 78 residues: UPF0270 protein YPO0179/y3960/YP_0178 (78 aa).

This sequence belongs to the UPF0270 family.

This is UPF0270 protein YPO0179/y3960/YP_0178 from Yersinia pestis.